Here is a 111-residue protein sequence, read N- to C-terminus: Nucleoid-associated protein NMCC_1355 (111 aa).

Belongs to the YbaB/EbfC family. As to quaternary structure, homodimer.

Its subcellular location is the cytoplasm. The protein resides in the nucleoid. Binds to DNA and alters its conformation. May be involved in regulation of gene expression, nucleoid organization and DNA protection. This Neisseria meningitidis serogroup C (strain 053442) protein is Nucleoid-associated protein NMCC_1355.